The primary structure comprises 82 residues: Small ribosomal subunit protein bS18 (82 aa).

The protein belongs to the bacterial ribosomal protein bS18 family. In terms of assembly, part of the 30S ribosomal subunit. Forms a tight heterodimer with protein bS6.

In terms of biological role, binds as a heterodimer with protein bS6 to the central domain of the 16S rRNA, where it helps stabilize the platform of the 30S subunit. This is Small ribosomal subunit protein bS18 from Bifidobacterium adolescentis (strain ATCC 15703 / DSM 20083 / NCTC 11814 / E194a).